A 105-amino-acid chain; its full sequence is ATP-dependent Clp protease adapter protein ClpS (105 aa).

Belongs to the ClpS family. Binds to the N-terminal domain of the chaperone ClpA.

Its function is as follows. Involved in the modulation of the specificity of the ClpAP-mediated ATP-dependent protein degradation. This is ATP-dependent Clp protease adapter protein ClpS from Aeromonas hydrophila subsp. hydrophila (strain ATCC 7966 / DSM 30187 / BCRC 13018 / CCUG 14551 / JCM 1027 / KCTC 2358 / NCIMB 9240 / NCTC 8049).